The sequence spans 840 residues: Sorting nexin-25 (840 aa).

Residues 1–164 enclose the PXA domain; sequence MDKALKEVFD…MLLAQLAYRE (164 aa). Positions 287-401 constitute an RGS domain; it reads QFEDILANTF…IVSDLYEKLL (115 aa). Residues 434–499 are a coiled coil; the sequence is TNQINEQASF…RTDLQLHMAR (66 aa). Residues 508–628 form the PX domain; sequence GMWKASITSG…AFLSPSPDYL (121 aa). S665 bears the Phosphoserine mark.

Belongs to the sorting nexin family.

The protein localises to the endosome membrane. In terms of biological role, may be involved in several stages of intracellular trafficking. In Homo sapiens (Human), this protein is Sorting nexin-25 (SNX25).